Reading from the N-terminus, the 260-residue chain is Membrane protein insertase YidC 1 (260 aa).

The N-terminal stretch at 1–22 is a signal peptide; it reads MLKSYRAVLVSLSLLLVFVLSG. The N-palmitoyl cysteine moiety is linked to residue Cys-23. The S-diacylglycerol cysteine moiety is linked to residue Cys-23. 5 consecutive transmembrane segments (helical) span residues 29 to 49, 52 to 72, 133 to 153, 164 to 184, and 213 to 233; these read IDAHSTGIWDHYFVYPISFMI, VAHHIPGASFGIAIIIMTLVI, LAGCWPLLIQMPIFSALYYAI, FLWVNLGHADPYHILPIIAAL, and MPAMILFMGFAAPSGLVLYWI.

It belongs to the OXA1/ALB3/YidC family. Type 2 subfamily.

It localises to the cell membrane. Its function is as follows. Required for the insertion and/or proper folding and/or complex formation of integral membrane proteins into the membrane. Involved in integration of membrane proteins that insert both dependently and independently of the Sec translocase complex, as well as at least some lipoproteins. The protein is Membrane protein insertase YidC 1 of Bacillus anthracis.